Reading from the N-terminus, the 233-residue chain is UPF0502 protein Mpe_A1449 (233 aa).

It belongs to the UPF0502 family.

The protein is UPF0502 protein Mpe_A1449 of Methylibium petroleiphilum (strain ATCC BAA-1232 / LMG 22953 / PM1).